The primary structure comprises 222 residues: Ribonuclease HII (222 aa).

Residues 17–206 (DLVAGVDEVG…VRAAHEARAS (190 aa)) form the RNase H type-2 domain. 3 residues coordinate a divalent metal cation: aspartate 23, glutamate 24, and aspartate 115.

The protein belongs to the RNase HII family. Mn(2+) is required as a cofactor. Requires Mg(2+) as cofactor.

The protein resides in the cytoplasm. The enzyme catalyses Endonucleolytic cleavage to 5'-phosphomonoester.. Functionally, endonuclease that specifically degrades the RNA of RNA-DNA hybrids. The protein is Ribonuclease HII of Pseudomonas savastanoi pv. phaseolicola (strain 1448A / Race 6) (Pseudomonas syringae pv. phaseolicola (strain 1448A / Race 6)).